The primary structure comprises 94 residues: DNA-directed RNA polymerase subunit omega (94 aa).

This sequence belongs to the RNA polymerase subunit omega family. The RNAP catalytic core consists of 2 alpha, 1 beta, 1 beta' and 1 omega subunit. When a sigma factor is associated with the core the holoenzyme is formed, which can initiate transcription.

The enzyme catalyses RNA(n) + a ribonucleoside 5'-triphosphate = RNA(n+1) + diphosphate. Functionally, promotes RNA polymerase assembly. Latches the N- and C-terminal regions of the beta' subunit thereby facilitating its interaction with the beta and alpha subunits. The protein is DNA-directed RNA polymerase subunit omega of Shewanella pealeana (strain ATCC 700345 / ANG-SQ1).